Consider the following 184-residue polypeptide: Photosystem I assembly protein Ycf4 (184 aa).

A run of 2 helical transmembrane segments spans residues Phe22–Ser42 and Ile57–Ser77.

Belongs to the Ycf4 family.

The protein localises to the plastid. It is found in the chloroplast thylakoid membrane. Functionally, seems to be required for the assembly of the photosystem I complex. The chain is Photosystem I assembly protein Ycf4 from Lactuca sativa (Garden lettuce).